The following is a 430-amino-acid chain: Trigger factor (430 aa).

The region spanning 164–249 is the PPIase FKBP-type domain; the sequence is DDWAVIDHEG…LKALKTRQLP (86 aa).

This sequence belongs to the FKBP-type PPIase family. Tig subfamily.

It localises to the cytoplasm. The catalysed reaction is [protein]-peptidylproline (omega=180) = [protein]-peptidylproline (omega=0). Its function is as follows. Involved in protein export. Acts as a chaperone by maintaining the newly synthesized protein in an open conformation. Functions as a peptidyl-prolyl cis-trans isomerase. This chain is Trigger factor, found in Anaeromyxobacter sp. (strain Fw109-5).